Consider the following 187-residue polypeptide: Ribosome-recycling factor (187 aa).

This sequence belongs to the RRF family.

The protein resides in the cytoplasm. Its function is as follows. Responsible for the release of ribosomes from messenger RNA at the termination of protein biosynthesis. May increase the efficiency of translation by recycling ribosomes from one round of translation to another. The chain is Ribosome-recycling factor from Flavobacterium psychrophilum (strain ATCC 49511 / DSM 21280 / CIP 103535 / JIP02/86).